The primary structure comprises 67 residues: Penaeidin-4c (67 aa).

A signal peptide spans 1 to 19; that stretch reads MRLVVCLVFLASFALVCQG. Intrachain disulfides connect Cys42/Cys56, Cys45/Cys63, and Cys57/Cys64. Arg66 bears the Arginine amide mark.

It belongs to the penaeidin family.

Its subcellular location is the cytoplasmic granule. Its function is as follows. Antibacterial and antifungal activity. Presents chitin-binding activity. The chain is Penaeidin-4c from Penaeus vannamei (Whiteleg shrimp).